Consider the following 187-residue polypeptide: Inner membrane-spanning protein YciB (187 aa).

5 helical membrane passes run 22–42 (IYVA…VTYA), 50–70 (MQLI…FFHD), 80–100 (IIYV…KSVV), 118–138 (INWA…YIAY), and 148–168 (FKVF…GVYI).

The protein belongs to the YciB family.

Its subcellular location is the cell inner membrane. Its function is as follows. Plays a role in cell envelope biogenesis, maintenance of cell envelope integrity and membrane homeostasis. This chain is Inner membrane-spanning protein YciB, found in Vibrio parahaemolyticus serotype O3:K6 (strain RIMD 2210633).